The chain runs to 262 residues: 3-methyl-2-oxobutanoate hydroxymethyltransferase (262 aa).

Mg(2+) contacts are provided by Asp44 and Asp83. Residues 44 to 45 (DS), Asp83, and Lys112 each bind 3-methyl-2-oxobutanoate. Residue Glu114 participates in Mg(2+) binding. Glu177 (proton acceptor) is an active-site residue.

It belongs to the PanB family. Homodecamer; pentamer of dimers. It depends on Mg(2+) as a cofactor.

Its subcellular location is the cytoplasm. The catalysed reaction is 3-methyl-2-oxobutanoate + (6R)-5,10-methylene-5,6,7,8-tetrahydrofolate + H2O = 2-dehydropantoate + (6S)-5,6,7,8-tetrahydrofolate. It functions in the pathway cofactor biosynthesis; coenzyme A biosynthesis. Functionally, catalyzes the reversible reaction in which hydroxymethyl group from 5,10-methylenetetrahydrofolate is transferred onto alpha-ketoisovalerate to form ketopantoate. The protein is 3-methyl-2-oxobutanoate hydroxymethyltransferase of Metallosphaera sedula (strain ATCC 51363 / DSM 5348 / JCM 9185 / NBRC 15509 / TH2).